We begin with the raw amino-acid sequence, 238 residues long: Cadherin-2 (238 aa).

3 Cadherin domains span residues 1–46, 47–161, and 162–238; these read TKPL…RPEF, LHQV…PPEF, and TAMT…RMFV. At 1–238 the chain is on the extracellular side; it reads TKPLDRELIA…IDFETNRMFV (238 aa). D5, E7, D38, M39, N40, D41, and N42 together coordinate Ca(2+). Residue N52 is glycosylated (N-linked (GlcNAc...) asparagine). Ca(2+)-binding residues include D72, D74, and N80. N-linked (GlcNAc...) asparagine glycosylation is present at N104. D132 serves as a coordination point for Ca(2+). N-linked (GlcNAc...) asparagine glycosylation occurs at N181.

In terms of assembly, homodimer (via extracellular region). Can also form heterodimers with other cadherins (via extracellular region). Dimerization occurs in trans, i.e. with a cadherin chain from another cell. Interacts with CDCP1. Interacts with PCDH8; this complex may also include TAOK2. The interaction with PCDH8 may lead to internalization through TAOK2/p38 MAPK pathway. Identified in a complex containing FGFR4, NCAM1, CDH2, PLCG1, FRS2, SRC, SHC1, GAP43 and CTTN. May interact with OBSCN (via protein kinase domain 2). Cleaved by MMP24. Ectodomain cleavage leads to the generation of a soluble 90 kDa N-terminal soluble fragment and a 45 kDa membrane-bound C-terminal fragment 1 (CTF1), which is further cleaved by gamma-secretase into a 35 kDa. Cleavage in neural stem cells by MMP24 affects CDH2-mediated anchorage of neural stem cells to ependymocytes in the adult subependymal zone, leading to modulate neural stem cell quiescence. Post-translationally, may be phosphorylated by OBSCN.

The protein resides in the cell membrane. Its subcellular location is the sarcolemma. The protein localises to the cell junction. It localises to the cell surface. It is found in the desmosome. The protein resides in the adherens junction. In terms of biological role, calcium-dependent cell adhesion protein; preferentially mediates homotypic cell-cell adhesion by dimerization with a CDH2 chain from another cell. Cadherins may thus contribute to the sorting of heterogeneous cell types. Acts as a regulator of neural stem cells quiescence by mediating anchorage of neural stem cells to ependymocytes in the adult subependymal zone: upon cleavage by MMP24, CDH2-mediated anchorage is affected, leading to modulate neural stem cell quiescence. Plays a role in cell-to-cell junction formation between pancreatic beta cells and neural crest stem (NCS) cells, promoting the formation of processes by NCS cells. Required for proper neurite branching. Required for pre- and postsynaptic organization. CDH2 may be involved in neuronal recognition mechanism. In hippocampal neurons, may regulate dendritic spine density. In Cricetulus griseus (Chinese hamster), this protein is Cadherin-2 (CDH2).